Here is a 274-residue protein sequence, read N- to C-terminus: Dehydration-responsive element-binding protein 2A (274 aa).

Basic and acidic residues-rich tracts occupy residues 1-10 (MERGEGRRGD) and 35-50 (KWWK…ENSS). The segment at 1 to 75 (MERGEGRRGD…KGGPENSNCA (75 aa)) is disordered. The segment at residues 75 to 132 (AYRGVRQRTWGKWVAEIREPNRGRRLWLGSFPTALEAAHAYDEAARAMYGPTARVNFA) is a DNA-binding region (AP2/ERF).

It belongs to the AP2/ERF transcription factor family. ERF subfamily.

The protein resides in the nucleus. Transcriptional activator that binds specifically to the DNA sequence 5'-[AG]CCGAC-3'. Binding to the C-repeat/DRE element mediates high salinity- and dehydration-inducible transcription. This Oryza sativa subsp. indica (Rice) protein is Dehydration-responsive element-binding protein 2A (DREB2A).